We begin with the raw amino-acid sequence, 520 residues long: Cytochrome P450 716A67 (520 aa).

The helical transmembrane segment at 4-24 threads the bilayer; the sequence is SLAIYYGIILITVTLGLVYTW. Cys466 provides a ligand contact to heme.

This sequence belongs to the cytochrome P450 family. It depends on heme as a cofactor.

The protein resides in the membrane. Its function is as follows. Catalyzes hydroxylation at the C-2 position of different intermediates of the hemolytic sapogenin biosynthetic pathway downstream of oleanolic acid synthesis. The protein is Cytochrome P450 716A67 of Medicago truncatula (Barrel medic).